The chain runs to 134 residues: Large ribosomal subunit protein eL32 (134 aa).

Belongs to the eukaryotic ribosomal protein eL32 family.

In Picrophilus torridus (strain ATCC 700027 / DSM 9790 / JCM 10055 / NBRC 100828 / KAW 2/3), this protein is Large ribosomal subunit protein eL32 (rpl32e).